Consider the following 443-residue polypeptide: MKIGIINTKIRTVFSAFACMIAASLVCTMPARAVVEININKGVIEPLPIAITDFLSADQLGSNITSVIAADLERSGLFAPIDKGAFIEKISNPDAAPRFEDWKVINAQALVTGRITKQPDGRLKAEFHLWDTFGGQRMIGQQFFTTPDNWRRVAHIIADAIYERLTGDKGYFDTRVVFVDESGPAQKRVKRLAIMDQDGANVRFISDGRALSLTPRFSPNRQEVTYMSFEGGSPKVYLLQLETGQRELVGNFPGMTIAPRFSPDGQKVVMSLLQDDGSANIYTMDLRNRTTTRLTSSQAIDTGASYSPDGSQIVFTSDRGGRPQLYVMGADGSNPRRISMGDGSYSTPVWSPRGDLIAFTKQSQGQFSIGVMKTDGSGERLLTSGFHNEGPTWAPNGRVLMFFRKAAGAGGPKLFTIDLTGRNERQIQTPNFASDPAWSPLLE.

The signal sequence occupies residues 1–33; the sequence is MKIGIINTKIRTVFSAFACMIAASLVCTMPARA.

Belongs to the TolB family. As to quaternary structure, the Tol-Pal system is composed of five core proteins: the inner membrane proteins TolA, TolQ and TolR, the periplasmic protein TolB and the outer membrane protein Pal. They form a network linking the inner and outer membranes and the peptidoglycan layer.

Its subcellular location is the periplasm. Part of the Tol-Pal system, which plays a role in outer membrane invagination during cell division and is important for maintaining outer membrane integrity. The protein is Tol-Pal system protein TolB of Brucella canis (strain ATCC 23365 / NCTC 10854 / RM-666).